The following is a 1619-amino-acid chain: Rap-GAP domain-containing protein DDB_G0281809 (1619 aa).

Disordered regions lie at residues 128 to 249, 289 to 316, 907 to 974, and 1134 to 1153; these read SMSN…TTPI, QQQQ…MPGS, SIGG…PYIN, and ISNN…TSNN. 2 stretches are compositionally biased toward low complexity: residues 130–204 and 231–249; these read SNNN…SLSL and QISA…TTPI. A coiled-coil region spans residues 265–295; sequence FNEVVQQQQQQQQQQQQQQQQQQQQQQQQQS. 2 stretches are compositionally biased toward low complexity: residues 916-926 and 934-965; these read SGNSSQPSSTG and SGSK…NGGS. Residues 1273–1494 form the Rap-GAP domain; sequence LNMLDSVSER…TNRKKLISDI (222 aa). Positions 1554 to 1619 are disordered; the sequence is IGTFTLPPPP…LSQSEDQSHK (66 aa). Over residues 1559–1573 the composition is skewed to pro residues; that stretch reads LPPPPISPTISPQPS. Residues 1574–1590 show a composition bias toward low complexity; the sequence is PHLSSSGGSWASSKGGS. The segment covering 1591–1619 has biased composition (polar residues); the sequence is TQPTTPSGRTSNFLSRRPNLSQSEDQSHK.

The chain is Rap-GAP domain-containing protein DDB_G0281809 from Dictyostelium discoideum (Social amoeba).